The sequence spans 221 residues: 2-amino-5-formylamino-6-ribosylaminopyrimidin-4(3H)-one 5'-monophosphate deformylase (221 aa).

The Fe cation site is built by E29, H31, D40, and H108.

It belongs to the creatininase superfamily. FAPy deformylase family. As to quaternary structure, homodimer. It depends on Fe(2+) as a cofactor. The cofactor is Zn(2+).

The enzyme catalyses 2-amino-5-formylamino-6-(5-phospho-D-ribosylamino)pyrimidin-4(3H)-one + H2O = 2,5-diamino-6-(1-D-ribosylamino)pyrimidin-4(3H)-one 5'-phosphate + formate + H(+). Its pathway is cofactor biosynthesis; coenzyme F420 biosynthesis. The protein operates within cofactor biosynthesis; riboflavin biosynthesis. In terms of biological role, catalyzes the hydrolysis of the formamide of 2-amino-5-formylamino-6-ribosylamino-4(3H)-pyrimidinone 5'-monophosphate (FAPy) to form 2,5-diamino-6-ribosylamino-4(3H)-pyrimidinone 5'-phosphate (APy). The polypeptide is 2-amino-5-formylamino-6-ribosylaminopyrimidin-4(3H)-one 5'-monophosphate deformylase (Methanococcus maripaludis (strain C7 / ATCC BAA-1331)).